The chain runs to 559 residues: Aminopeptidase Q (559 aa).

Residues 1–13 lie on the Cytoplasmic side of the membrane; the sequence is MSRPFSSGVYVSR. Residues 14–34 form a helical; Signal-anchor for type II membrane protein membrane-spanning segment; that stretch reads GVALLLAALTAVLLLVLVALA. Residues 35 to 559 lie on the Lumenal side of the membrane; the sequence is SLYGSCAHVQ…VPFRHFLAEH (525 aa). Residues Asn-121 and Asn-129 are each glycosylated (N-linked (GlcNAc...) asparagine). Substrate is bound at residue Glu-237. N-linked (GlcNAc...) asparagine glycosylation is found at Asn-258, Asn-285, and Asn-343. 376-380 is a binding site for substrate; it reads GAMEN. His-412 is a binding site for Zn(2+). Catalysis depends on Glu-413, which acts as the Proton acceptor. Residues His-416 and Glu-435 each contribute to the Zn(2+) site.

Belongs to the peptidase M1 family. In terms of assembly, homodimer. Zn(2+) is required as a cofactor. In terms of processing, N-glycosylated.

It localises to the membrane. Its activity is regulated as follows. Inhibited by bestatin. In terms of biological role, metalloprotease which may be important for placentation by regulating biological activity of key peptides at the embryo-maternal interface. On synthetic substrates it shows a marked preference for Leu-4-methylcoumaryl-7-amide (Leu-MCA) over Met-MCA, Arg-LCA and Lys-LCA. Cleaves the N-terminal amino acid of several peptides such as angiotensin-3, kisspeptin-10 and endokinin C. In Mus musculus (Mouse), this protein is Aminopeptidase Q.